The primary structure comprises 494 residues: Flagellin A (494 aa).

The protein belongs to the bacterial flagellin family. In terms of assembly, heteromer of FlaA and FlaB. FlaB is located proximal to the hook while the remainder of the filament is composed of the predominant FlaA.

The protein localises to the secreted. It is found in the bacterial flagellum. Its function is as follows. Flagellin is the subunit protein which polymerizes to form the filaments of bacterial flagella. Important for motility and virulence. This is Flagellin A (flaA) from Helicobacter mustelae.